The sequence spans 496 residues: Beta-N-acetylhexosaminidase (496 aa).

Catalysis depends on E298, which acts as the Proton donor.

Belongs to the glycosyl hydrolase 20 family.

It carries out the reaction Hydrolysis of terminal non-reducing N-acetyl-D-hexosamine residues in N-acetyl-beta-D-hexosaminides.. Its pathway is glycan degradation; chitin degradation. Functionally, catalyzes the cleavage of beta-N-acetylglucosaminides and beta-N-acetylgalactosaminides. Also catalyzes the hydrolysis of N-acetylchitooligomers. May be involved in chitin degradation. It is not able to cleave beta-glucosides. This is Beta-N-acetylhexosaminidase (hex20) from Cellulomonas fimi.